We begin with the raw amino-acid sequence, 159 residues long: Protein UXT homolog (159 aa).

It belongs to the UXT family.

The sequence is that of Protein UXT homolog from Nematostella vectensis (Starlet sea anemone).